A 222-amino-acid chain; its full sequence is Uclacyanin-3 (222 aa).

Positions 1–21 (MGSTVAAALLLFLAAVPAVFA) are cleaved as a signal peptide. Positions 22-120 (ATFKVGDISG…GMKLAVPVLA (99 aa)) constitute a Phytocyanin domain. Residues His-61, Cys-102, His-107, and Met-112 each coordinate Cu cation. The cysteines at positions 74 and 108 are disulfide-linked. The segment at 121–198 (AAPSPSTPSS…APLPPSLSPN (78 aa)) is disordered. Composition is skewed to pro residues over residues 125–172 (PSTP…PSAS) and 185–195 (TPPPAPLPPSL). Asn-198 carries GPI-anchor amidated asparagine lipidation. A propeptide spans 199–222 (AASKGVMSYGIIGVTMILMYAVMT) (removed in mature form).

The protein localises to the cell membrane. Probably acts as an electron carrier involved in oxygen activation and/or lignin formation. This is Uclacyanin-3 (UCC3) from Arabidopsis thaliana (Mouse-ear cress).